A 324-amino-acid polypeptide reads, in one-letter code: Dioxygenase tasH (324 aa).

The N-terminal stretch at 1 to 25 is a signal peptide; the sequence is MRSMSLWMLIGPVTGIATWASLRYA. 3 residues coordinate Zn(2+): histidine 50, histidine 96, and histidine 284.

It belongs to the DODA-type extradiol aromatic ring-opening dioxygenase family. In terms of assembly, monomer. Zn(2+) serves as cofactor.

Dioxygenase; part of the gene cluster that mediates the biosynthesis of the tetramic acids Sch210971 and Sch210972, potential anti-HIV fungal natural product that contain a decalin core. The PKS module of tasS together with the enoylreductase tasC catalyze the formation of the polyketide unit which is then conjugated to 4-hydroxyl-4-methyl glutamate (HMG) by the condensation domain of the tasS NRPS module. One unique structural feature of Sch210971 and Sch210972 is the tetramic acid motif proposed to be derived from the non-proteinogenic amino acid HMG, by a Dieckmann-type condensation catalyzed by the reductase domain of tasS. The aldolase tasA catalyzes the aldol condensation of 2 molecules of pyruvic acid to yield the intermediate 4-hydroxyl-4-methyl-2-oxoglutarate (HMOG), which can then be stereoselectively transaminated, may be by tasG, to form HMG. The Diels-Alderase tas3 then uses the Dieckmann product of tasS as substrate and catalyzes the Diels-Alder cycloaddition to form the decalin ring of Sch210971 and Sch210972. In Hapsidospora irregularis, this protein is Dioxygenase tasH.